We begin with the raw amino-acid sequence, 156 residues long: Small ribosomal subunit protein uS10m (156 aa).

It belongs to the universal ribosomal protein uS10 family.

The protein localises to the mitochondrion. Ribosomal protein required for normal mitochondrial function and normal larval development. Thought to have a role in insulin/IGF signaling. The sequence is that of Small ribosomal subunit protein uS10m (mrps-10) from Caenorhabditis elegans.